The following is a 254-amino-acid chain: Triosephosphate isomerase (254 aa).

Residue 9–11 participates in substrate binding; the sequence is NWK. His-96 acts as the Electrophile in catalysis. The active-site Proton acceptor is Glu-169. Residues Gly-175, Ser-215, and 236–237 each bind substrate; that span reads GG.

It belongs to the triosephosphate isomerase family. In terms of assembly, homodimer.

The protein resides in the cytoplasm. It catalyses the reaction D-glyceraldehyde 3-phosphate = dihydroxyacetone phosphate. The protein operates within carbohydrate biosynthesis; gluconeogenesis. Its pathway is carbohydrate degradation; glycolysis; D-glyceraldehyde 3-phosphate from glycerone phosphate: step 1/1. In terms of biological role, involved in the gluconeogenesis. Catalyzes stereospecifically the conversion of dihydroxyacetone phosphate (DHAP) to D-glyceraldehyde-3-phosphate (G3P). The protein is Triosephosphate isomerase of Borrelia duttonii (strain Ly).